A 173-amino-acid polypeptide reads, in one-letter code: Protein tyrosine phosphatase type IVA 3 (173 aa).

Positions 8–161 (APVEVSYRHM…YRPKQRLRFK (154 aa)) constitute a Tyrosine-protein phosphatase domain. A disulfide bridge links Cys49 with Cys104. The active-site Proton donor is the Asp72. Cys104 (phosphocysteine intermediate) is an active-site residue. Substrate is bound at residue Arg110. The residue at position 170 (Cys170) is a Cysteine methyl ester. Cys170 is lipidated: S-farnesyl cysteine. Positions 171 to 173 (CVM) are cleaved as a propeptide — removed in mature form.

This sequence belongs to the protein-tyrosine phosphatase family. Interacts with tubulin. In terms of processing, farnesylated. Farnesylation is required for membrane targeting. Unfarnesylated forms are shifted into the nucleus. Present in the small intestine, where it is located in the differentiated epithelial cells of the villus but not in the proliferating crypt cells (at protein level). Expressed in heart and skeletal muscle, and at lower levels in lung, spleen and testis.

The protein localises to the cell membrane. Its subcellular location is the early endosome. It catalyses the reaction O-phospho-L-tyrosyl-[protein] + H2O = L-tyrosyl-[protein] + phosphate. Inhibited by sodium orthovanadate and peroxovanadium compounds, and by pentamidine. In terms of biological role, protein tyrosine phosphatase which stimulates progression from G1 into S phase during mitosis. Enhances cell proliferation, cell motility and invasive activity, and promotes cancer metastasis. May be involved in the progression of cardiac hypertrophy by inhibiting intracellular calcium mobilization in response to angiotensin II. The protein is Protein tyrosine phosphatase type IVA 3 (Ptp4a3) of Mus musculus (Mouse).